We begin with the raw amino-acid sequence, 343 residues long: MQPPPPGPLGDCLRDWEDLQQDFQNIQETHRLYRLKLEELTKLQNNCTSSITRQKKRLQELALALKKCKPSLPAEAEGAAQELENQMKERQGLFFDMEAYLPKKNGLYLSLVLGNVNVTLLSKQAKFAYKDEYEKFKLYLTIILILISFTCRFLLNSRVTDAAFNFLLVWYYCTLTIRESILINNGSRIKGWWVFHHYVSTFLSGVMLTWPDGLMYQKFRNQFLSFSMYQSFVQFLQYYYQSGCLYRLRALGERHTMDLTVEGFQSWMWRGLTFLLPFLFFGHFWQLFNALTLFNLAQDPQCKEWQVLMCGFPFLLLFLGNFFTTLRVVHHKFHSQRHGSKKD.

Residues methionine 1–glutamate 132 are Cytoplasmic-facing. Residue lysine 130 participates in CoA binding. Residues tyrosine 133–arginine 152 traverse the membrane as a helical segment. Residues phenylalanine 153–arginine 158 lie on the Extracellular side of the membrane. Residues valine 159–isoleucine 177 form a helical membrane-spanning segment. The Cytoplasmic portion of the chain corresponds to arginine 178–lysine 190. Residues serine 187 and arginine 188 each coordinate CoA. A helical membrane pass occupies residues glycine 191–threonine 209. Residues tryptophan 210–lysine 218 are Extracellular-facing. Residues phenylalanine 219–tyrosine 240 traverse the membrane as a helical segment. CoA contacts are provided by glutamine 237, tyrosine 240, glutamine 241, and histidine 283. Residues glutamine 241 to arginine 270 lie on the Cytoplasmic side of the membrane. The helical transmembrane segment at glycine 271–phenylalanine 294 threads the bilayer. Topologically, residues asparagine 295–glutamate 304 are extracellular. Residues tryptophan 305–histidine 330 form a helical membrane-spanning segment. Over histidine 331–aspartate 343 the chain is Cytoplasmic. CoA is bound at residue lysine 332.

Belongs to the TMEM120 family. Homodimer. Forms heterooligomer with TMEM120B. Interacts with PKD2; TMEM120A inhibits PKD2 channel activity through the physical association of PKD2 with TMEM120A. Interacts (via C-terminal domain) with STING1; regulates the trafficking of STING1 from the ER to the ER-Golgi intermediate compartment to elicit antiviral effects. Expressed in nociceptors.

It localises to the cell membrane. It is found in the nucleus inner membrane. The protein localises to the endoplasmic reticulum. Functionally, multifunctional protein involved in mechanosensation, and plays an essential role in lipid metabolism and adipocyte differentiation. May function as a potential ion channel involved in sensing mechanical stimuli. Mediates the mechanosensitivity of the PKD2-TMEM120A channel complex through direct physical interaction. TMEM120A seems to affect mechanosensation by inhibiting PIEZO2 channels, possibly by altering cellular lipid content. TMEM120A is structurally similar to a lipid-modifying enzyme, ELOVL7, and contains a bound coenzyme A molecule, which suggests it might function as an enzyme in lipid metabolism. Additionnaly, implicated in innate immune response against Zika virus. Acts as a key activator of the antiviral signaling involving STING1. The polypeptide is Transmembrane protein 120A (Homo sapiens (Human)).